A 128-amino-acid chain; its full sequence is Phosphoribosyl-AMP cyclohydrolase (128 aa).

D77 contributes to the Mg(2+) binding site. C78 provides a ligand contact to Zn(2+). Mg(2+) contacts are provided by D79 and D81. Zn(2+) contacts are provided by C94 and C101.

It belongs to the PRA-CH family. Homodimer. It depends on Mg(2+) as a cofactor. The cofactor is Zn(2+).

It localises to the cytoplasm. It catalyses the reaction 1-(5-phospho-beta-D-ribosyl)-5'-AMP + H2O = 1-(5-phospho-beta-D-ribosyl)-5-[(5-phospho-beta-D-ribosylamino)methylideneamino]imidazole-4-carboxamide. The protein operates within amino-acid biosynthesis; L-histidine biosynthesis; L-histidine from 5-phospho-alpha-D-ribose 1-diphosphate: step 3/9. Its function is as follows. Catalyzes the hydrolysis of the adenine ring of phosphoribosyl-AMP. The protein is Phosphoribosyl-AMP cyclohydrolase of Granulibacter bethesdensis (strain ATCC BAA-1260 / CGDNIH1).